The chain runs to 159 residues: Probable carbonic anhydrase (159 aa).

Substrate contacts are provided by residues 33-35 (RGD) and 48-49 (QD). 3 residues coordinate Zn(2+): His54, His71, and His76.

The protein belongs to the gamma-class carbonic anhydrase family. Zn(2+) is required as a cofactor.

It catalyses the reaction hydrogencarbonate + H(+) = CO2 + H2O. Functionally, probably reversibly hydrates carbon dioxide. This is Probable carbonic anhydrase from Methanocaldococcus jannaschii (strain ATCC 43067 / DSM 2661 / JAL-1 / JCM 10045 / NBRC 100440) (Methanococcus jannaschii).